A 215-amino-acid chain; its full sequence is Protein-L-isoaspartate O-methyltransferase (215 aa).

Serine 62 is a catalytic residue.

It belongs to the methyltransferase superfamily. L-isoaspartyl/D-aspartyl protein methyltransferase family.

It is found in the cytoplasm. It catalyses the reaction [protein]-L-isoaspartate + S-adenosyl-L-methionine = [protein]-L-isoaspartate alpha-methyl ester + S-adenosyl-L-homocysteine. Catalyzes the methyl esterification of L-isoaspartyl residues in peptides and proteins that result from spontaneous decomposition of normal L-aspartyl and L-asparaginyl residues. It plays a role in the repair and/or degradation of damaged proteins. This is Protein-L-isoaspartate O-methyltransferase from Bradyrhizobium sp. (strain ORS 278).